We begin with the raw amino-acid sequence, 851 residues long: Transforming growth factor beta receptor type 3 (851 aa).

The N-terminal stretch at 1–20 (MTSHYVIAIFALMSSCLATA) is a signal peptide. At 21 to 787 (GPEPGALCEL…IFHGLDTLTV (767 aa)) the chain is on the extracellular side. The cysteines at positions 52 and 197 are disulfide-linked. N-linked (GlcNAc...) asparagine glycosylation is found at asparagine 141 and asparagine 492. Residues 455 to 730 (KCDNEKMIVA…PKCVPPDEAC (276 aa)) enclose the ZP domain. O-linked (Xyl...) (glycosaminoglycan) serine glycans are attached at residues serine 534 and serine 545. Asparagine 571, asparagine 590, and asparagine 697 each carry an N-linked (GlcNAc...) asparagine glycan. 3 disulfide bridges follow: cysteine 639–cysteine 705, cysteine 660–cysteine 730, and cysteine 710–cysteine 723. An interaction with TGF-beta ligand region spans residues 737-751 (IIWAMMQNKKTFTKP). Residues 788–809 (MGIAFAAFVIGALLTGALWYIY) form a helical membrane-spanning segment. Topologically, residues 810 to 851 (SHTGETAGRQQVPTSPPASENSSAAHSIGSTQSTPCSSSSTA) are cytoplasmic. The interval 816-851 (AGRQQVPTSPPASENSSAAHSIGSTQSTPCSSSSTA) is disordered. Polar residues predominate over residues 817–834 (GRQQVPTSPPASENSSAA). Residues 836 to 851 (SIGSTQSTPCSSSSTA) are compositionally biased toward low complexity. Phosphothreonine is present on threonine 840.

In terms of assembly, forms homodimers and homooligomers. Interacts with DYNLT4. Interacts with integrin ITGA5:ITGB1; this interaction promotes the internalization and trafficking of ITGA5:ITGB1 into endocytic vesicles. Interacts with TGFB1, BMP2, BMP5, BMP7 or GDF5 and inhibin A via the ligand binding domains. Interacts with ALK3/BMPR1A; this interaction results in the cell surface retention of BMPR1A. Interacts with ALK6/BMPR1B; this interaction enhances BMPR1B-mediated stimulation of the BMP signaling pathway. Interacts with the scaffolding protein beta-arrestin2/ARRB2; this interaction mediates internalization of TGFBR3 and thus regulates migration, actin cytoskeleton and activation of CDC42. As to quaternary structure, (Microbial infection) Interacts with human cytomegalovirus trimer complex composed of gH, gL, and gO; these interactions may promote HCMV cell entry in specific cell types. Post-translationally, extensively modified by glycosaminoglycan groups (GAG). Phosphorylated in the cytoplasmic domain by the type II receptor TGFBR2 at THR-840 to mediate recruitment of ARRB2 and subsequent internalization of TGFBR2 and TGFBR3.

It is found in the cell membrane. The protein resides in the secreted. The protein localises to the extracellular space. Its subcellular location is the extracellular matrix. Functionally, cell surface receptor that regulates diverse cellular processes including cell proliferation, differentiation, migration, and apoptosis. Initiates BMP, inhibin, and TGF-beta signaling pathways by interacting with different ligands including TGFB1, BMP2, BMP5, BMP7 or GDF5. Alternatively, acts as a cell surface coreceptor for BMP ligands, serving to enhance ligand binding by differentially regulating BMPR1A/ALK3 and BMPR1B/ALK6 receptor trafficking. Promotes epithelial cell adhesion, focal adhesion formation and integrin signaling during epithelial cell spreading on fibronectin. By interacting with the scaffolding protein beta-arrestin2/ARRB2, regulates migration or actin cytoskeleton and promotes the activation of CDC42 as well as the inhibition of NF-kappa-B. In gonadotrope cells, acts as an inhibin A coreceptor and regulates follicle-stimulating hormone (FSH) levels and female fertility. Plays a role in the inhibition of directed and random cell migration in epithelial cells by altering the actin cytoskeletal organization. Participates in epithelial-mesenchymal transformation (EMT) upon binding to BMP2 or TGFB2, by activating the PAR6/SMURF1/RHOA pathway. In terms of biological role, (Microbial infection) May act as a receptor for human cytomegalovirus in different cell types by interacting with HCMV trimer composed of GO, GH and GL. This chain is Transforming growth factor beta receptor type 3, found in Homo sapiens (Human).